Here is a 219-residue protein sequence, read N- to C-terminus: Mucosal pentraxin (219 aa).

The signal sequence occupies residues 1 to 19 (MEKLIVGILFLSVLSGSVA). In terms of domain architecture, Pentraxin (PTX) spans 24 to 219 (KGKAFIFPQE…YVVIKPKLWP (196 aa)). Asn-51 carries an N-linked (GlcNAc...) asparagine glycan. The cysteines at positions 55 and 114 are disulfide-linked. Residues Asp-77, Asn-78, Glu-155, Gln-156, Asp-157, and Gln-167 each contribute to the Ca(2+) site.

The protein belongs to the pentraxin family. Homopentamer. Pentraxin (or pentaxin) have a discoid arrangement of 5 non-covalently bound subunits. Ca(2+) serves as cofactor. In terms of tissue distribution, expressed in colon.

The protein localises to the secreted. This Mus musculus (Mouse) protein is Mucosal pentraxin (Mptx1).